The following is an 800-amino-acid chain: Elongation factor G, mitochondrial (800 aa).

The N-terminal 59 residues, methionine 1–arginine 59, are a transit peptide targeting the mitochondrion. A tr-type G domain is found at alanine 99 to asparagine 385. GTP is bound by residues alanine 108–threonine 115, aspartate 183–histidine 187, and asparagine 237–aspartate 240.

The protein belongs to the TRAFAC class translation factor GTPase superfamily. Classic translation factor GTPase family. EF-G/EF-2 subfamily.

The protein resides in the mitochondrion. It participates in protein biosynthesis; polypeptide chain elongation. Mitochondrial GTPase that catalyzes the GTP-dependent ribosomal translocation step during translation elongation. During this step, the ribosome changes from the pre-translocational (PRE) to the post-translocational (POST) state as the newly formed A-site-bound peptidyl-tRNA and P-site-bound deacylated tRNA move to the P and E sites, respectively. Catalyzes the coordinated movement of the two tRNA molecules, the mRNA and conformational changes in the ribosome. This chain is Elongation factor G, mitochondrial (mef1), found in Neurospora crassa (strain ATCC 24698 / 74-OR23-1A / CBS 708.71 / DSM 1257 / FGSC 987).